The following is a 145-amino-acid chain: 3-hydroxyacyl-[acyl-carrier-protein] dehydratase FabZ (145 aa).

His-48 is an active-site residue.

The protein belongs to the thioester dehydratase family. FabZ subfamily.

The protein localises to the cytoplasm. The catalysed reaction is a (3R)-hydroxyacyl-[ACP] = a (2E)-enoyl-[ACP] + H2O. Its function is as follows. Involved in unsaturated fatty acids biosynthesis. Catalyzes the dehydration of short chain beta-hydroxyacyl-ACPs and long chain saturated and unsaturated beta-hydroxyacyl-ACPs. This is 3-hydroxyacyl-[acyl-carrier-protein] dehydratase FabZ from Saccharophagus degradans (strain 2-40 / ATCC 43961 / DSM 17024).